The primary structure comprises 447 residues: Polyamine export protein (447 aa).

The Cytoplasmic portion of the chain corresponds to 1–4 (MLNS). In terms of domain architecture, CNNM transmembrane spans 1–197 (MLNSILVILC…ALAGVLRKQE (197 aa)). Residues 5 to 25 (ILVILCLIAVSAFFSMSEISL) traverse the membrane as a helical segment. The Periplasmic segment spans residues 26-54 (AASRKIKLKLLADEGNINAQRVLNMQENP). Residues 55-75 (GMFFTVVQIGLNAVAILGGIV) form a helical membrane-spanning segment. The Cytoplasmic portion of the chain corresponds to 76 to 99 (GDAAFSPAFHSLFSRYMSAELSEQ). A helical membrane pass occupies residues 100 to 120 (LSFILSFSLVTGMFILFADLT). The Periplasmic segment spans residues 121–141 (PKRIGMIAPEAVALRIINPMR). Residues 142–162 (FCLYVCTPLVWFFNGLANIIF) traverse the membrane as a helical segment. Residues 163 to 447 (RIFKLPMVRK…DAKDKEESVA (285 aa)) are Cytoplasmic-facing. CBS domains follow at residues 216–275 (MTPR…NQSL) and 282–343 (QIRN…GLEE).

This sequence belongs to the UPF0053 family. PaeA subfamily.

It localises to the cell inner membrane. Its function is as follows. Involved in cadaverine and putrescine tolerance in stationary phase. May facilitate the efflux of both cadaverine and putrescine from the cytoplasm, reducing potentially toxic levels under certain stress conditions. The chain is Polyamine export protein from Escherichia coli O157:H7.